A 984-amino-acid chain; its full sequence is Putative formate dehydrogenase SAUSA300_2258 (984 aa).

The 2Fe-2S ferredoxin-type domain occupies Glu3–Asp79. The [2Fe-2S] cluster site is built by Cys37, Cys48, Cys51, and Cys63. The 4Fe-4S His(Cys)3-ligated-type domain occupies Asp79–Gly119. Residues His95, Cys99, Cys102, Cys109, Cys147, Cys150, Cys153, Cys157, Cys190, Cys193, Cys196, Cys200, Cys264, Cys267, Cys271, and Cys299 each contribute to the [4Fe-4S] cluster site. 4Fe-4S ferredoxin-type domains lie at Pro138 to Thr165 and Asn181 to Glu211. Residues Met252–Lys984 are formate dehydrogenase. The 57-residue stretch at Ile257–Gln313 folds into the 4Fe-4S Mo/W bis-MGD-type domain.

In the C-terminal section; belongs to the prokaryotic molybdopterin-containing oxidoreductase family. [2Fe-2S] cluster serves as cofactor. Requires [4Fe-4S] cluster as cofactor. The cofactor is Mo-bis(molybdopterin guanine dinucleotide).

It catalyses the reaction formate + NAD(+) = CO2 + NADH. The sequence is that of Putative formate dehydrogenase SAUSA300_2258 from Staphylococcus aureus (strain USA300).